The primary structure comprises 361 residues: MSNQDLINCKSNSGLTYAKAGVDIDVGNAMVEKIKPFIRSTKRAGADVEIGGFGGLFDLKAAGFTDPILVAANDGVGTKLKIAIEVGIHDTVGIDLVAMCINDLLVQGAEPLFFLDYFATGKLDPEQGAAIVSGIAVGCQQAGAALIGGETAEMPGMYAKGDYDLAGFAVGATERSALLPSKDLAEGDIILGLSSSGIHSNGFSLVRRIVQQSGLKWGDYAPFNPQMNLGTALLTPTRIYVKSLLPIIKTYKGIKALAHITGGGLPENIPRVLPSSLCAEINLSAIHVPPVFSWIAKQGKIEETEMLRTFNCGIGMVIIVAQHAVETITQILEMQGEIVTLLGILTKHPTKKILYKGVLHL.

It belongs to the AIR synthase family.

It is found in the cytoplasm. It carries out the reaction 2-formamido-N(1)-(5-O-phospho-beta-D-ribosyl)acetamidine + ATP = 5-amino-1-(5-phospho-beta-D-ribosyl)imidazole + ADP + phosphate + H(+). It participates in purine metabolism; IMP biosynthesis via de novo pathway; 5-amino-1-(5-phospho-D-ribosyl)imidazole from N(2)-formyl-N(1)-(5-phospho-D-ribosyl)glycinamide: step 2/2. The sequence is that of Phosphoribosylformylglycinamidine cyclo-ligase from Bartonella quintana (strain Toulouse) (Rochalimaea quintana).